Here is a 305-residue protein sequence, read N- to C-terminus: tRNA dimethylallyltransferase (305 aa).

14–21 (GPTASGKT) contacts ATP. Residue 16-21 (TASGKT) coordinates substrate. Interaction with substrate tRNA regions lie at residues 39-42 (DSAL), 163-167 (QRIIR), and 243-248 (RCVGYR).

Belongs to the IPP transferase family. Monomer. It depends on Mg(2+) as a cofactor.

It catalyses the reaction adenosine(37) in tRNA + dimethylallyl diphosphate = N(6)-dimethylallyladenosine(37) in tRNA + diphosphate. Catalyzes the transfer of a dimethylallyl group onto the adenine at position 37 in tRNAs that read codons beginning with uridine, leading to the formation of N6-(dimethylallyl)adenosine (i(6)A). The chain is tRNA dimethylallyltransferase from Vesicomyosocius okutanii subsp. Calyptogena okutanii (strain HA).